A 700-amino-acid chain; its full sequence is Leucine zipper putative tumor suppressor 3 (700 aa).

4 disordered regions span residues 1–20 (MAPA…PAPH), 40–121 (RADP…SEDK), 133–188 (LRGS…SEPL), and 202–344 (FHSM…PPSP). Positions 109–121 (NRERPGRYPSEDK) are enriched in basic and acidic residues. The span at 203–216 (HSMQNLCPPQTNGT) shows a compositional bias: polar residues. Low complexity-rich tracts occupy residues 248 to 265 (DSGR…SSYS) and 301 to 321 (GTSD…MGRS). A compositionally biased stretch (gly residues) spans 322–333 (GHLGSGEGGNGG). 2 positions are modified to phosphoserine: Ser343 and Ser345. Coiled-coil stretches lie at residues 345–523 (SALI…SLRD) and 597–666 (TRAL…RLRE). Residues 662–700 (RRLRERGAAGGSSTPTPQHGEEKKAWTPSRLERIESTEI) form a disordered region. Basic and acidic residues predominate over residues 680-700 (HGEEKKAWTPSRLERIESTEI).

The protein belongs to the LZTS3 family. As to quaternary structure, interacts (via C-terminus) with SHANK3 (via PDZ domain). Interacts (via coiled coil) with SIPA1L1. Can form homooligomers.

It is found in the synapse. The protein resides in the postsynaptic density. The protein localises to the cell projection. It localises to the dendritic spine. Its subcellular location is the dendrite. It is found in the cytoplasm. The protein resides in the cytoskeleton. Its function is as follows. May be involved in promoting the maturation of dendritic spines, probably via regulating SIPA1L1 levels at the postsynaptic density of synapses. This chain is Leucine zipper putative tumor suppressor 3, found in Mus musculus (Mouse).